The chain runs to 109 residues: Protein GOLVEN 5 (109 aa).

Positions 1 to 24 (MTNITSSFLCLLILLLFCLSFGYS) are cleaved as a signal peptide. Positions 25 to 96 (LHGDKDEVLS…EEDDLVAYTA (72 aa)) are excised as a propeptide. The disordered stretch occupies residues 54-88 (KKAQVRGRSGQEFSKETTKMMMKKTTKKETNVEEE). Tyr98 is modified (sulfotyrosine). Pro106 is subject to Hydroxyproline.

The protein belongs to the RGF family. As to quaternary structure, binds to LRR receptor-like serine/threonine-protein kinases RGI1, RGI2 and RGI3 to trigger their dimerization with SERK proteins and subsequent signaling. Expressed in root tips.

Its subcellular location is the secreted. Signaling peptide (root growth factor) that maintains the postembryonic root stem cell niche in a PIN2-traffic dependent manner. Root growth factor that regulates the pattern of root growth and lateral root development by modulating the length and the number of cortical cells in the root apical meristem (RAM), and the anticlinal asymmetric cell divisions in lateral root initiation cells. Influences the longitudinal growth rate in the primary root in response to phosphate ion (Pi)-deprivation. The chain is Protein GOLVEN 5 from Arabidopsis thaliana (Mouse-ear cress).